Here is a 255-residue protein sequence, read N- to C-terminus: 5'-nucleotidase SurE (255 aa).

A divalent metal cation-binding residues include Asp8, Asp9, Ser39, and Asn95.

Belongs to the SurE nucleotidase family. Requires a divalent metal cation as cofactor.

It is found in the cytoplasm. The catalysed reaction is a ribonucleoside 5'-phosphate + H2O = a ribonucleoside + phosphate. Nucleotidase that shows phosphatase activity on nucleoside 5'-monophosphates. The chain is 5'-nucleotidase SurE from Rubrivivax gelatinosus (strain NBRC 100245 / IL144).